Here is a 75-residue protein sequence, read N- to C-terminus: uncharacterized protein (75 aa).

This is an uncharacterized protein from Escherichia coli (Bacteriophage T4).